Here is a 454-residue protein sequence, read N- to C-terminus: ABSCISIC ACID-INSENSITIVE 5-like protein 6 (454 aa).

Residues serine 32, serine 55, and serine 126 each carry the phosphoserine modification. The residue at position 169 (threonine 169) is a Phosphothreonine. The region spanning 372–435 is the bZIP domain; it reads IERRQKRMIK…KNQLLEPLRQ (64 aa). The basic motif stretch occupies residues 374–393; it reads RRQKRMIKNRESAARSRARK. The segment at 400–414 is leucine-zipper; sequence LEAEIAQLKELNEEL.

This sequence belongs to the bZIP family. ABI5 subfamily. As to quaternary structure, DNA-binding heterodimer. Interacts with ABI3 and the AFP proteins AFP1, AFP2, AFP3 and AFP4. In terms of tissue distribution, expressed in roots and flowers.

Its subcellular location is the nucleus. Its function is as follows. Binds to the ABA-responsive element (ABRE). Mediates stress-responsive ABA signaling. The sequence is that of ABSCISIC ACID-INSENSITIVE 5-like protein 6 (ABF3) from Arabidopsis thaliana (Mouse-ear cress).